A 282-amino-acid polypeptide reads, in one-letter code: Tetraspanin-6 (282 aa).

The Cytoplasmic segment spans residues 1-7; that stretch reads MYRFSNT. Residues 8-28 traverse the membrane as a helical segment; it reads VIGVLNLLTLLASIPIIGTAL. The Extracellular segment spans residues 29–44; that stretch reads YKARSSTTCENFLQTP. Residues 45 to 65 form a helical membrane-spanning segment; it reads LLVIGFIILIVSLAGFIGACF. Residues 66–74 lie on the Cytoplasmic side of the membrane; sequence NVAWALWVY. The chain crosses the membrane as a helical span at residues 75 to 95; it reads LVVMIFLIATLMGLTLFGLVV. Residues 96–220 are Extracellular-facing; it reads TSQGGGVEVP…EIRLDWRKLS (125 aa). The chain crosses the membrane as a helical span at residues 221-241; sequence VVNILVLVLLIAVYAAGCCAF. The Cytoplasmic segment spans residues 242-282; the sequence is HNTRHAAHPYHPSDDNRMTRVRPRWDYYWWRWWHEKKEQLY.

The protein belongs to the tetraspanin (TM4SF) family.

It localises to the membrane. Its function is as follows. May be involved in the regulation of cell differentiation. In Arabidopsis thaliana (Mouse-ear cress), this protein is Tetraspanin-6 (TET6).